A 368-amino-acid polypeptide reads, in one-letter code: MAVSLGDDDADELPSMLWGLDPVFSSYCRLYITDILLMKESRQVPGIYFYKTHPIFQVDVLGIVVYKREREDFYCYGVDDSTGVINCLCWKDEKWRDQGGSTTCGDASGFPRSFNIEDELKGLKEAERKSTVLEIGDLLRVRGTVKTSRDNREIKATSFYKVHDPAMAVQISRMLELPQLYRKCYDQPFKMPSDDLGSTEAGGSSHPQYLLSRAVLTLKEFLLEKEVTRFRPYDVEFLLHPLIQRSSAEQEADQPGTSFATQVGKLLKETLSFLQDEGQIFRKKRTQDEVYNVTEQDKDLHIAIKDVLREDTKREKYAEKGCHVLHILSSVRQRYSQNLSREVLEVALTFLESNSDIISTTEAHYIVL.

The tract at residues 2 to 192 (AVSLGDDDAD…KCYDQPFKMP (191 aa)) is interaction with CTC1. Positions 58–162 (VDVLGIVVYK…EIKATSFYKV (105 aa)) form a DNA-binding region, OB. Winged helix-turn-helix (wHTH) regions lie at residues 201–295 (AGGS…NVTE) and 296–368 (QDKD…YIVL).

The protein belongs to the CTC1 family. In terms of assembly, component of the CST complex.

It localises to the nucleus. The protein localises to the chromosome. Its subcellular location is the telomere. In terms of biological role, component of the CST complex proposed to act as a specialized replication factor promoting DNA replication under conditions of replication stress or natural replication barriers such as the telomere duplex. The CST complex binds single-stranded DNA with high affinity in a sequence-independent manner, while isolated subunits bind DNA with low affinity by themselves. Initially the CST complex has been proposed to protect telomeres from DNA degradation. However, the CST complex has been shown to be involved in several aspects of telomere replication. In Danio rerio (Zebrafish), this protein is CST complex subunit STN1.